The primary structure comprises 35 residues: Sperm protamine alpha isoform 2 (35 aa).

Residues 1–35 (MPRRRRRASRPIRRRRRARRSTAVRRRRRVVRRRR) form a disordered region. Phosphoserine is present on residues S9 and S21.

Post-translationally, phosphorylated in immature sperm. Dephosphorylated in mature sperm allowing a stronger interaction with DNA. Gonads.

It is found in the nucleus. Its subcellular location is the chromosome. Its function is as follows. Protamines substitute for histones in the chromatin of sperm during the haploid phase of spermatogenesis. They compact sperm DNA into a highly condensed, stable and inactive complex. The sequence is that of Sperm protamine alpha isoform 2 from Scomber scombrus (Atlantic mackerel).